Here is a 253-residue protein sequence, read N- to C-terminus: CD151 antigen (253 aa).

At 1–18 (MGEFNEKKTTCGTVCLKY) the chain is on the cytoplasmic side. 2 S-palmitoyl cysteine lipidation sites follow: Cys11 and Cys15. The helical transmembrane segment at 19–39 (LLFTYNCCFWLAGLAVMAVGI) threads the bilayer. At 40-57 (WTLALKSDYISLLASGTY) the chain is on the extracellular side. A helical membrane pass occupies residues 58–78 (LATAYILVVAGTVVMVTGVLG). The Cytoplasmic segment spans residues 79–91 (CCATFKERRNLLR). A helical membrane pass occupies residues 92 to 112 (LYFILLLIIFLLEIIAGILAY). Residues 113–221 (AYYQQLNTEL…LETFIQEHLR (109 aa)) are Extracellular-facing. Residue Asn159 is glycosylated (N-linked (GlcNAc...) asparagine). Residues 222–242 (VIGAVGIGIACVQVFGMIFTC) form a helical membrane-spanning segment. S-palmitoyl cysteine attachment occurs at residues Cys242 and Cys243. At 243-253 (CLYRSLKLEHY) the chain is on the cytoplasmic side.

Belongs to the tetraspanin (TM4SF) family. As to quaternary structure, interacts with integrins ITGA3:ITGB1, ITGA5:ITGB1, ITGA3:ITGB1 and ITGA6:ITGB4 and with CD9 and CD181. Interacts (via the second extracellular domain) with integrin ITGAV:ITGB3. Interacts with ITGA3; this interaction modulates ITGA3 glycosylation pattern. Interacts with F11R. Interacts with RAC1 and CDC42; these interactions mediate physical association of RAC1 and CDC42 with integrin adhesion receptor complexes. Palmitoylated. Palmitoylation by ZDHHC2 regulates CD151 expression, association with other tetraspanin family proteins and function in cell adhesion. In terms of processing, ubiquitinated by RNF128 on lysine residues present in the tetraspanin amino terminus via 'Lys-48'-linked ubiquitin leading to proteasomal degradation. In terms of tissue distribution, expressed in a variety of tissues including vascular endothelium and epidermis. Expressed on erythroid cells, with a higher level of expression in erythroid precursors than on mature erythrocytes. Acts as a sensitive T-cell activation marker.

The protein localises to the cell membrane. Functionally, structural component of specialized membrane microdomains known as tetraspanin-enriched microdomains (TERMs), which act as platforms for receptor clustering and signaling. Plays a role in various cellular and molecular mechanism through its association with both integrin and non-integrin proteins. These interactions facilitate critical cellular functions, including cell-to-cell communication, wound healing, platelet aggregation, trafficking, cell motility, and angiogenesis. Via interaction with JAM-A/F11R and integrin ITGA3:ITGB1, promotes the recruitment of signaling molecules such as RAC1, CDC42 and RhoGTPases to facilitate the polarization of epithelial cells and the reorganization of the actin cytoskeleton, which are critical steps in cell migration process. Regulates the glycosylation pattern of ITGA3:ITGB1 thereby modulating its activity. Plays an essential role in the maintenance of central laminin-binding integrin ITGA6:ITGB4-containing adhesion complexes. Essential for the proper assembly of the glomerular and tubular basement membranes in kidney. Contributes to T-cell activation by modulating integrin signaling leading to activation of downstream targets PTK2 and MAPK1/MAPK3. (Microbial infection) Plays a role in human papillomavirus 16/HPV-16 endocytosis upon binding to cell surface receptor. Its function is as follows. (Microbial infection) Plays a role in human cytomegalovirus entry into host cell by contributing to entry receptor binding, membrane fusion, or release of the capsid. The sequence is that of CD151 antigen (CD151) from Homo sapiens (Human).